We begin with the raw amino-acid sequence, 317 residues long: Protein translocase subunit SecF (317 aa).

Helical transmembrane passes span Phe11–Leu31, Arg135–Phe155, Ile166–Leu186, Leu197–Phe217, Leu244–Gly266, and Leu276–Trp298.

The protein belongs to the SecD/SecF family. SecF subfamily. As to quaternary structure, forms a complex with SecD. Part of the essential Sec protein translocation apparatus which comprises SecA, SecYEG and auxiliary proteins SecDF. Other proteins may also be involved.

It localises to the cell membrane. Its function is as follows. Part of the Sec protein translocase complex. Interacts with the SecYEG preprotein conducting channel. SecDF uses the proton motive force (PMF) to complete protein translocation after the ATP-dependent function of SecA. The protein is Protein translocase subunit SecF of Thermobaculum terrenum (strain ATCC BAA-798 / CCMEE 7001 / YNP1).